A 493-amino-acid polypeptide reads, in one-letter code: 1-aminocyclopropane-1-carboxylate synthase CMW33 (493 aa).

N6-(pyridoxal phosphate)lysine is present on lysine 279.

This sequence belongs to the class-I pyridoxal-phosphate-dependent aminotransferase family. Homodimer. Pyridoxal 5'-phosphate serves as cofactor.

The enzyme catalyses S-adenosyl-L-methionine = 1-aminocyclopropane-1-carboxylate + S-methyl-5'-thioadenosine + H(+). It functions in the pathway alkene biosynthesis; ethylene biosynthesis via S-adenosyl-L-methionine; ethylene from S-adenosyl-L-methionine: step 1/2. Its function is as follows. Catalyzes the formation of 1-aminocyclopropane-1-carboxylate, a direct precursor of ethylene in higher plants. The protein is 1-aminocyclopropane-1-carboxylate synthase CMW33 (ACS1) of Cucurbita maxima (Pumpkin).